The sequence spans 744 residues: Adenosylcobalamin-dependent ribonucleoside-triphosphate reductase (744 aa).

Cysteines 120 and 424 form a disulfide. An effector region-1 region spans residues 148-159; sequence SMPFSFLFDQLM. Residues 169 to 318 form an effector region-2 region; it reads VDDNINQIPQ…ICNLIGKTVV (150 aa). Residues Cys-413 and Glu-415 contribute to the active site. The adenosylcobalamin-binding-1 stretch occupies residues 570–631; it reads FHYAGYLIQR…SKNFASAGTV (62 aa). The adenosylcobalamin-binding-2 stretch occupies residues 690-729; it reads LKQAPKEPINKKAYEDRVAMITGDVKEVFENQNKDQKGLE.

This sequence belongs to the class II ribonucleoside-triphosphate reductase family. In terms of assembly, monomer. Adenosylcob(III)alamin is required as a cofactor.

It catalyses the reaction a 2'-deoxyribonucleoside 5'-triphosphate + [thioredoxin]-disulfide + H2O = a ribonucleoside 5'-triphosphate + [thioredoxin]-dithiol. Its activity is regulated as follows. Allosterically regulated by ATP and dNTP. This Lactobacillus helveticus (strain DPC 4571) protein is Adenosylcobalamin-dependent ribonucleoside-triphosphate reductase (rtpR).